A 243-amino-acid chain; its full sequence is Protein-L-isoaspartate O-methyltransferase 2 (243 aa).

A disordered region spans residues 21-42 (DACADRGHPSAERSTPETERRR). Basic and acidic residues predominate over residues 23-42 (CADRGHPSAERSTPETERRR). S94 is a catalytic residue.

Belongs to the methyltransferase superfamily. L-isoaspartyl/D-aspartyl protein methyltransferase family.

It is found in the cytoplasm. It carries out the reaction [protein]-L-isoaspartate + S-adenosyl-L-methionine = [protein]-L-isoaspartate alpha-methyl ester + S-adenosyl-L-homocysteine. Catalyzes the methyl esterification of L-isoaspartyl residues in peptides and proteins that result from spontaneous decomposition of normal L-aspartyl and L-asparaginyl residues. It plays a role in the repair and/or degradation of damaged proteins. This chain is Protein-L-isoaspartate O-methyltransferase 2, found in Anaeromyxobacter sp. (strain Fw109-5).